We begin with the raw amino-acid sequence, 223 residues long: Urease accessory protein UreF (223 aa).

The protein belongs to the UreF family. As to quaternary structure, ureD, UreF and UreG form a complex that acts as a GTP-hydrolysis-dependent molecular chaperone, activating the urease apoprotein by helping to assemble the nickel containing metallocenter of UreC. The UreE protein probably delivers the nickel.

Its subcellular location is the cytoplasm. Its function is as follows. Required for maturation of urease via the functional incorporation of the urease nickel metallocenter. The protein is Urease accessory protein UreF of Sinorhizobium medicae (strain WSM419) (Ensifer medicae).